Reading from the N-terminus, the 365-residue chain is Flagellar P-ring protein (365 aa).

The N-terminal stretch at 1–19 (MIKFLSALILLLVTTAAQA) is a signal peptide.

The protein belongs to the FlgI family. In terms of assembly, the basal body constitutes a major portion of the flagellar organelle and consists of four rings (L,P,S, and M) mounted on a central rod.

Its subcellular location is the periplasm. It is found in the bacterial flagellum basal body. Assembles around the rod to form the L-ring and probably protects the motor/basal body from shearing forces during rotation. The chain is Flagellar P-ring protein from Shigella boydii serotype 4 (strain Sb227).